The chain runs to 475 residues: ISWI one complex protein 4 (475 aa).

Residue Ser2 is modified to Phosphoserine. Thr9 carries the post-translational modification Phosphothreonine. Disordered stretches follow at residues 42–84, 181–296, and 454–475; these read VSVH…DFGE, EEEY…IKYH, and EMDR…KVGA. Ser65 and Ser73 each carry phosphoserine. Acidic residues-rich tracts occupy residues 72–84, 181–193, and 241–252; these read QSEE…DFGE, EEEY…EENE, and ASEEEEEEEEEK. Ser242 carries the phosphoserine modification. Basic residues predominate over residues 259-294; the sequence is KRPQRTKTKKVVVSKTKPNPKTKAKKEKPKPPKPIK. The segment covering 456-475 has biased composition (basic and acidic residues); that stretch reads DREKPSFSEDVKEEESKVGA.

As to quaternary structure, component of the ISW1B complex, which at least consists of ISW1, IOC2 and IOC4.

The protein resides in the nucleus. Functions as a component of the ISW1B complex, which acts in remodeling the chromatin by catalyzing an ATP-dependent alteration in the structure of nucleosomal DNA. The ISW1B complex acts within coding regions to control the amount of RNA polymerase II released into productive elongation and to coordinate elongation with termination and pre-mRNA processing. This Saccharomyces cerevisiae (strain ATCC 204508 / S288c) (Baker's yeast) protein is ISWI one complex protein 4 (IOC4).